The primary structure comprises 459 residues: tRNA modification GTPase MnmE (459 aa).

(6S)-5-formyl-5,6,7,8-tetrahydrofolate contacts are provided by Arg-23, Glu-88, and Arg-127. Residues 223 to 381 (GLSVVIVGKP…IKNCIKELFF (159 aa)) enclose the TrmE-type G domain. Asn-233 lines the K(+) pocket. GTP contacts are provided by residues 233–238 (NVGKSS), 252–258 (TDIPGTT), and 277–280 (DTAG). Ser-237 is a binding site for Mg(2+). Residues Thr-252, Ile-254, and Thr-257 each coordinate K(+). Residue Thr-258 coordinates Mg(2+). Lys-459 contacts (6S)-5-formyl-5,6,7,8-tetrahydrofolate.

It belongs to the TRAFAC class TrmE-Era-EngA-EngB-Septin-like GTPase superfamily. TrmE GTPase family. Homodimer. Heterotetramer of two MnmE and two MnmG subunits. K(+) serves as cofactor.

It localises to the cytoplasm. Functionally, exhibits a very high intrinsic GTPase hydrolysis rate. Involved in the addition of a carboxymethylaminomethyl (cmnm) group at the wobble position (U34) of certain tRNAs, forming tRNA-cmnm(5)s(2)U34. The polypeptide is tRNA modification GTPase MnmE (Clostridium kluyveri (strain ATCC 8527 / DSM 555 / NBRC 12016 / NCIMB 10680 / K1)).